A 298-amino-acid polypeptide reads, in one-letter code: MAQKVEAQGGKGANLWDDGSTHDAVTKIQLAAGIDGIQYVQFDYVKNGQPEQAPLRGTKGRVLPADPFVINHPDEHLVSVEGWYSPEGIIQGIKFISNKKTSDVIGSDEGTHFTLQVKDKKIIGFHGSAGGNLNSLGAYFAPLTTTTPLTPAKQLTAFGSDDGTVWDDGAYVGVKKVYVGQAQDGISAVKFVYDKSPEEVTGEEHGKSTLLGFEEFVLDYPSEYITAVDGTYDKIFGSDGSVITMLRFKTNKQTSPPFGLEAGTVFELKEEGHKIVGFHGRADVLLHKIGVHVRPLSN.

Ala2 carries the N-acetylalanine modification. Jacalin-type lectin domains are found at residues 2-142 (AQKV…YFAP) and 152-295 (AKQL…HVRP). Phosphoserine is present on Ser20.

Belongs to the jacalin lectin family. In terms of assembly, component of the PYK10 complex, at least composed of PYK10/BGLU23, BGLU21, BGLU22, JAL22, JAL23, PBP1/JAL30, PBP2/JAL31, JAL32, JAL33, JAL34, JAL35, GLL22 and GLL23. In terms of tissue distribution, expressed exclusively in roots.

The protein localises to the cytoplasm. In terms of biological role, inhibitor-type lectin that may regulate the correct polymerization of BGLU23/PYK10 upon tissue damage. Activates BGLU21, BGLU22 and BGLU23. In Arabidopsis thaliana (Mouse-ear cress), this protein is PYK10-binding protein 1 (PBP1).